Consider the following 214-residue polypeptide: MRIILLGAPGAGKGTQAQFIMQQYGIPQISTGDMLRAAVKAGTPLGLEAKKVMDAGQLVSDELIIGLVKERIAQDDCVKGFLLDGFPRTIPQADAMAANGIEIDHVIEIDVPDEEIVKRMSGRRVHSGSGRVYHVVFNPPKVEGKDDVTGEDLSIRPDDEESTVRKRLDIYHEQTKPLVEYYGNVAAQGKTQYNKFDGTQSVAAVSEQLAKVIG.

10-15 is a binding site for ATP; sequence GAGKGT. Positions 30–59 are NMP; that stretch reads STGDMLRAAVKAGTPLGLEAKKVMDAGQLV. Residues threonine 31, arginine 36, 57-59, 85-88, and glutamine 92 contribute to the AMP site; these read QLV and GFPR. Positions 122 to 159 are LID; sequence GRRVHSGSGRVYHVVFNPPKVEGKDDVTGEDLSIRPDD. Residues arginine 123 and 132–133 each bind ATP; that span reads VY. The AMP site is built by arginine 156 and arginine 167. Residue glutamine 200 participates in ATP binding.

It belongs to the adenylate kinase family. As to quaternary structure, monomer.

The protein resides in the cytoplasm. The enzyme catalyses AMP + ATP = 2 ADP. Its pathway is purine metabolism; AMP biosynthesis via salvage pathway; AMP from ADP: step 1/1. Catalyzes the reversible transfer of the terminal phosphate group between ATP and AMP. Plays an important role in cellular energy homeostasis and in adenine nucleotide metabolism. This Shewanella denitrificans (strain OS217 / ATCC BAA-1090 / DSM 15013) protein is Adenylate kinase.